The following is a 317-amino-acid chain: Ribonuclease 3-like protein 2 (317 aa).

Residues Met1–Pro26 form a disordered region. Residues Pro16–Pro26 show a composition bias toward pro residues. Positions Ala37–Lys185 constitute an RNase III domain. The Mg(2+) site is built by Glu74, Asp171, and Glu174. A DRBM domain is found at Gln211 to Gly274.

It depends on Mg(2+) as a cofactor. Mn(2+) serves as cofactor.

Its function is as follows. Cleaves double-stranded RNA (dsRNA). This Oryza sativa subsp. japonica (Rice) protein is Ribonuclease 3-like protein 2.